The sequence spans 1052 residues: Kinesin-like protein KIF11 (1052 aa).

Positions 17–358 constitute a Kinesin motor domain; it reads NIQVVVRCRP…LEYAHRAKNI (342 aa). Residue 104–111 participates in ATP binding; it reads GQTGTGKT. K145 bears the N6-acetyllysine mark. The stretch at 364–478 forms a coiled coil; that stretch reads VNQKLTKKAL…ETKLQLVKEE (115 aa). T457 bears the Phosphothreonine mark. A Glycyl lysine isopeptide (Lys-Gly) (interchain with G-Cter in SUMO2) cross-link involves residue K476. A Phosphothreonine modification is found at T925. Disordered stretches follow at residues 950 to 1026 and 1033 to 1052; these read LQKK…LNPV and EASD…SINL. Positions 963-988 form a coiled coil; sequence EASKETSQDMDEEREALEQCTEELVS. Residues 1016–1026 are compositionally biased toward basic and acidic residues; that stretch reads KDKENRGLNPV.

Belongs to the TRAFAC class myosin-kinesin ATPase superfamily. Kinesin family. BimC subfamily. In terms of assembly, interacts with the thyroid hormone receptor in the presence of thyroid hormone. Component of a large chromatin remodeling complex, at least composed of MYSM1, PCAF, RBM10 and KIF11/TRIP5. Interacts with RARRES1 and AGBL2. In terms of processing, phosphorylated exclusively on serine during S phase, but on both serine and Thr-925 during mitosis, so controlling the association of KIF11 with the spindle apparatus (probably during early prophase).

Its subcellular location is the cytoplasm. It is found in the cytoskeleton. The protein localises to the spindle pole. Functionally, motor protein required for establishing a bipolar spindle during mitosis. Required in non-mitotic cells for transport of secretory proteins from the Golgi complex to the cell surface. The polypeptide is Kinesin-like protein KIF11 (Kif11) (Mus musculus (Mouse)).